A 212-amino-acid polypeptide reads, in one-letter code: Ferric nitrobindin-like protein (212 aa).

The segment covering 1–11 (MTSSDQPERGS) has biased composition (basic and acidic residues). Residues 1–36 (MTSSDQPERGSGDAAVQAAAERAEQTRGRNVPQFDD) form a disordered region. Residues 64-70 (GVWRGDG) carry the GXWXGXG motif.

The protein belongs to the nitrobindin family.

This chain is Ferric nitrobindin-like protein, found in Saccharopolyspora erythraea (strain ATCC 11635 / DSM 40517 / JCM 4748 / NBRC 13426 / NCIMB 8594 / NRRL 2338).